The primary structure comprises 231 residues: Large ribosomal subunit protein uL1 (231 aa).

It belongs to the universal ribosomal protein uL1 family. In terms of assembly, part of the 50S ribosomal subunit.

Its function is as follows. Binds directly to 23S rRNA. The L1 stalk is quite mobile in the ribosome, and is involved in E site tRNA release. In terms of biological role, protein L1 is also a translational repressor protein, it controls the translation of the L11 operon by binding to its mRNA. This chain is Large ribosomal subunit protein uL1, found in Paracidovorax citrulli (strain AAC00-1) (Acidovorax citrulli).